Consider the following 518-residue polypeptide: Protein nucleotidyltransferase YdiU (518 aa).

The span at 1 to 10 (MTHLHFDNRL) shows a compositional bias: basic and acidic residues. The segment at 1–25 (MTHLHFDNRLRQQLPGDPEEGARRR) is disordered. Glycine 100, glycine 102, arginine 103, lysine 123, aspartate 135, glycine 136, arginine 193, and arginine 200 together coordinate ATP. The Proton acceptor role is filled by aspartate 270. Positions 271 and 280 each coordinate Mg(2+). Aspartate 280 contacts ATP.

The protein belongs to the SELO family. It depends on Mg(2+) as a cofactor. Requires Mn(2+) as cofactor.

It catalyses the reaction L-seryl-[protein] + ATP = 3-O-(5'-adenylyl)-L-seryl-[protein] + diphosphate. The catalysed reaction is L-threonyl-[protein] + ATP = 3-O-(5'-adenylyl)-L-threonyl-[protein] + diphosphate. It carries out the reaction L-tyrosyl-[protein] + ATP = O-(5'-adenylyl)-L-tyrosyl-[protein] + diphosphate. The enzyme catalyses L-histidyl-[protein] + UTP = N(tele)-(5'-uridylyl)-L-histidyl-[protein] + diphosphate. It catalyses the reaction L-seryl-[protein] + UTP = O-(5'-uridylyl)-L-seryl-[protein] + diphosphate. The catalysed reaction is L-tyrosyl-[protein] + UTP = O-(5'-uridylyl)-L-tyrosyl-[protein] + diphosphate. Functionally, nucleotidyltransferase involved in the post-translational modification of proteins. It can catalyze the addition of adenosine monophosphate (AMP) or uridine monophosphate (UMP) to a protein, resulting in modifications known as AMPylation and UMPylation. The polypeptide is Protein nucleotidyltransferase YdiU (Xanthomonas euvesicatoria pv. vesicatoria (strain 85-10) (Xanthomonas campestris pv. vesicatoria)).